Consider the following 287-residue polypeptide: 2-dehydro-3-deoxyphosphooctonate aldolase (287 aa).

This sequence belongs to the KdsA family.

It is found in the cytoplasm. The enzyme catalyses D-arabinose 5-phosphate + phosphoenolpyruvate + H2O = 3-deoxy-alpha-D-manno-2-octulosonate-8-phosphate + phosphate. It functions in the pathway carbohydrate biosynthesis; 3-deoxy-D-manno-octulosonate biosynthesis; 3-deoxy-D-manno-octulosonate from D-ribulose 5-phosphate: step 2/3. The protein operates within bacterial outer membrane biogenesis; lipopolysaccharide biosynthesis. The protein is 2-dehydro-3-deoxyphosphooctonate aldolase of Rhodopseudomonas palustris (strain ATCC BAA-98 / CGA009).